Here is a 760-residue protein sequence, read N- to C-terminus: Anti-sigma-I factor RsgI6 (760 aa).

Topologically, residues 1–55 (MIVGKVLDMDEKTAIIMTDDFAFLNVVRTSEMAVGKKVKVLDSDIIKPKNSLRRY) are cytoplasmic. The RsgI N-terminal anti-sigma domain maps to 2–49 (IVGKVLDMDEKTAIIMTDDFAFLNVVRTSEMAVGKKVKVLDSDIIKPK). Residues 56 to 76 (LPVAAVAACFVIVLSFVLMFI) form a helical membrane-spanning segment. The Extracellular segment spans residues 77–760 (NGNTARKNIY…GTLQTTYRIP (684 aa)). Residues 274 to 352 (AINTGPAESA…STPKPVSPVQ (79 aa)) are disordered. Polar residues predominate over residues 291-352 (LPATSTPGRT…STPKPVSPVQ (62 aa)). A GH10 domain is found at 402-701 (DSSNKPIENA…NEAGRRFESL (300 aa)). Residue E538 is the Proton donor of the active site. Residue E635 is the Nucleophile of the active site.

It in the C-terminal section; belongs to the glycosyl hydrolase 10 (cellulase F) family. Interacts (via RsgI N-terminal anti-sigma domain) with SigI6.

The protein localises to the cell membrane. The catalysed reaction is Endohydrolysis of (1-&gt;4)-beta-D-xylosidic linkages in xylans.. Its pathway is glycan degradation; xylan degradation. Its function is as follows. Anti-sigma factor for SigI6. Negatively regulates SigI6 activity through direct interaction. Binding of the polysaccharide substrate to the extracellular C-terminal sensing domain of RsgI6 may induce a conformational change in its N-terminal cytoplasmic region, leading to the release and activation of SigI6. Binds to and hydrolyzes insoluble and soluble xylan substrates. Has low enzymatic activity. The chain is Anti-sigma-I factor RsgI6 from Acetivibrio thermocellus (strain ATCC 27405 / DSM 1237 / JCM 9322 / NBRC 103400 / NCIMB 10682 / NRRL B-4536 / VPI 7372) (Clostridium thermocellum).